Consider the following 1157-residue polypeptide: Peroxisomal ATPase PEX1 (1157 aa).

2 disordered regions span residues 187–221 (SISS…NNGE) and 1135–1157 (SGRD…STLM). Positions 205-217 (SSTSTATGRRSVT) are enriched in low complexity.

Belongs to the AAA ATPase family. Interacts with PEX6; forming the PEX1-PEX6 AAA ATPase complex, which is composed of a heterohexamer formed by a trimer of PEX1-PEX6 dimers.

It localises to the membrane. It carries out the reaction ATP + H2O = ADP + phosphate + H(+). Its function is as follows. Component of the PEX1-PEX6 AAA ATPase complex involved in peroxisome biosynthesis. The complex acts as a protein dislocase complex that mediates the ATP-dependent extraction of the PEX5 receptor from peroxisomal membranes, an essential step for PEX5 recycling. Specifically recognizes PEX5 monoubiquitinated at 'Cys-6', and pulls it out of the peroxisome lumen through the PEX2-PEX10-PEX12 retrotranslocation channel. Extraction by the PEX1-PEX6 AAA ATPase complex is accompanied by unfolding of the TPR repeats and release of bound cargo from PEX5. This is Peroxisomal ATPase PEX1 from Komagataella pastoris (Yeast).